A 1016-amino-acid chain; its full sequence is Mediator of RNA polymerase II transcription subunit 5 (1016 aa).

Belongs to the Mediator complex subunit 5 family. Component of the Mediator complex.

The protein localises to the nucleus. Its function is as follows. Component of the Mediator complex, a coactivator involved in the regulated transcription of nearly all RNA polymerase II-dependent genes. Mediator functions as a bridge to convey information from gene-specific regulatory proteins to the basal RNA polymerase II transcription machinery. Mediator is recruited to promoters by direct interactions with regulatory proteins and serves as a scaffold for the assembly of a functional preinitiation complex with RNA polymerase II and the general transcription factors. The polypeptide is Mediator of RNA polymerase II transcription subunit 5 (nut1) (Aspergillus terreus (strain NIH 2624 / FGSC A1156)).